The primary structure comprises 158 residues: Protein-export protein SecB (158 aa).

It belongs to the SecB family. As to quaternary structure, homotetramer, a dimer of dimers. One homotetramer interacts with 1 SecA dimer.

It localises to the cytoplasm. Functionally, one of the proteins required for the normal export of preproteins out of the cell cytoplasm. It is a molecular chaperone that binds to a subset of precursor proteins, maintaining them in a translocation-competent state. It also specifically binds to its receptor SecA. This is Protein-export protein SecB from Yersinia pestis (strain Pestoides F).